The chain runs to 405 residues: Na(+)/H(+) antiporter NhaA 1 (405 aa).

A run of 11 helical transmembrane segments spans residues 20–40, 68–88, 105–125, 134–154, 163–183, 186–206, 214–234, 263–283, 301–321, 334–354, and 371–391; these read FVSD…AMIV, LHLW…GLEV, LPVL…VGVV, GWAI…GLLG, LFLL…IAAF, ANLK…MVGM, IWPY…SGVH, GLAP…NAGV, IAAG…VAAV, WIEI…SLFI, and IGIL…LRLT.

This sequence belongs to the NhaA Na(+)/H(+) (TC 2.A.33) antiporter family.

The protein localises to the cell inner membrane. The enzyme catalyses Na(+)(in) + 2 H(+)(out) = Na(+)(out) + 2 H(+)(in). Functionally, na(+)/H(+) antiporter that extrudes sodium in exchange for external protons. The sequence is that of Na(+)/H(+) antiporter NhaA 1 from Erythrobacter litoralis (strain HTCC2594).